The primary structure comprises 121 residues: Large ribosomal subunit protein bL12 (121 aa).

It belongs to the bacterial ribosomal protein bL12 family. Homodimer. Part of the ribosomal stalk of the 50S ribosomal subunit. Forms a multimeric L10(L12)X complex, where L10 forms an elongated spine to which 2 to 4 L12 dimers bind in a sequential fashion. Binds GTP-bound translation factors.

Functionally, forms part of the ribosomal stalk which helps the ribosome interact with GTP-bound translation factors. Is thus essential for accurate translation. This chain is Large ribosomal subunit protein bL12, found in Shewanella frigidimarina (strain NCIMB 400).